The sequence spans 233 residues: 2,3,4,5-tetrahydropyridine-2,6-dicarboxylate N-acetyltransferase (233 aa).

The protein belongs to the transferase hexapeptide repeat family. DapH subfamily.

The enzyme catalyses (S)-2,3,4,5-tetrahydrodipicolinate + acetyl-CoA + H2O = L-2-acetamido-6-oxoheptanedioate + CoA. The protein operates within amino-acid biosynthesis; L-lysine biosynthesis via DAP pathway; LL-2,6-diaminopimelate from (S)-tetrahydrodipicolinate (acetylase route): step 1/3. Catalyzes the transfer of an acetyl group from acetyl-CoA to tetrahydrodipicolinate. The sequence is that of 2,3,4,5-tetrahydropyridine-2,6-dicarboxylate N-acetyltransferase from Thermosipho africanus (strain TCF52B).